A 125-amino-acid polypeptide reads, in one-letter code: Meiotically up-regulated gene 112 protein (125 aa).

The protein localises to the golgi apparatus. In terms of biological role, has a role in meiosis. The sequence is that of Meiotically up-regulated gene 112 protein (mug112) from Schizosaccharomyces pombe (strain 972 / ATCC 24843) (Fission yeast).